The primary structure comprises 449 residues: Naphthalene 1,2-dioxygenase system, large oxygenase component (449 aa).

Residues 39–137 form the Rieske domain; sequence WLFLTHDSLI…LDKKCMGLKE (99 aa). 4 residues coordinate [2Fe-2S] cluster: Cys-81, His-83, Cys-101, and His-104. 3 residues coordinate Fe cation: His-208, His-213, and Asp-362.

This sequence belongs to the bacterial ring-hydroxylating dioxygenase alpha subunit family. The naphthalene dioxygenase (NDO) multicomponent enzyme system is composed of an electron transfer component and a dioxygenase component (iron sulfur protein (ISP)). The electron transfer component is composed of a ferredoxin reductase (NdoR) and a ferredoxin (NdoA), and the dioxygenase component is formed of a heterohexamer (trimer of heterodimers) of three large alpha subunits (NdoB) and three small beta subunits (NdoC). The cofactor is [2Fe-2S] cluster. Fe(2+) is required as a cofactor.

It catalyses the reaction naphthalene + NADH + O2 + H(+) = (1R,2S)-1,2-dihydronaphthalene-1,2-diol + NAD(+). Its pathway is aromatic compound metabolism; naphthalene degradation. Component of the naphthalene dioxygenase (NDO) multicomponent enzyme system which catalyzes the incorporation of both atoms of molecular oxygen into naphthalene to form cis-(1R,2S)-dihydroxy-1,2-dihydronaphthalene. The alpha subunit has a catalytic role in the holoenzyme. The polypeptide is Naphthalene 1,2-dioxygenase system, large oxygenase component (Pseudomonas aeruginosa).